The sequence spans 335 residues: ATP-dependent 6-phosphofructokinase (335 aa).

G11 is a binding site for ATP. R21–R25 contacts ADP. ATP is bound by residues R72–Y73 and G102–S105. D103 serves as a coordination point for Mg(2+). T125–D127 lines the substrate pocket. The active-site Proton acceptor is the D127. R154 is a binding site for ADP. Substrate contacts are provided by residues R162 and M169–R171. Residues G185–D187 and K213–H215 each bind ADP. Substrate is bound by residues E222, R244, and H250 to R253.

It belongs to the phosphofructokinase type A (PFKA) family. ATP-dependent PFK group I subfamily. Prokaryotic clade 'B1' sub-subfamily. In terms of assembly, homotetramer. The cofactor is Mg(2+).

It is found in the cytoplasm. The catalysed reaction is beta-D-fructose 6-phosphate + ATP = beta-D-fructose 1,6-bisphosphate + ADP + H(+). The protein operates within carbohydrate degradation; glycolysis; D-glyceraldehyde 3-phosphate and glycerone phosphate from D-glucose: step 3/4. With respect to regulation, allosterically activated by ADP and other diphosphonucleosides, and allosterically inhibited by phosphoenolpyruvate. Functionally, catalyzes the phosphorylation of D-fructose 6-phosphate to fructose 1,6-bisphosphate by ATP, the first committing step of glycolysis. This chain is ATP-dependent 6-phosphofructokinase, found in Streptococcus pneumoniae (strain CGSP14).